The following is a 328-amino-acid chain: L-lactate dehydrogenase (328 aa).

NAD(+)-binding positions include Val-18, Glu-39, Lys-46, Tyr-71, and 85-86 (GA). Gln-88 and Arg-94 together coordinate substrate. Residues Ser-107, 124 to 126 (AAN), and Ser-149 contribute to the NAD(+) site. Substrate is bound at residue 126–129 (NPVD). Residue 154 to 157 (DSAR) coordinates substrate. Beta-D-fructose 1,6-bisphosphate is bound by residues Arg-159 and His-174. His-181 serves as the catalytic Proton acceptor. Tyr-226 is modified (phosphotyrosine). Position 235 (Thr-235) interacts with substrate.

This sequence belongs to the LDH/MDH superfamily. LDH family. As to quaternary structure, homotetramer.

It localises to the cytoplasm. The catalysed reaction is (S)-lactate + NAD(+) = pyruvate + NADH + H(+). Its pathway is fermentation; pyruvate fermentation to lactate; (S)-lactate from pyruvate: step 1/1. Allosterically activated by fructose 1,6-bisphosphate (FBP). Functionally, catalyzes the conversion of lactate to pyruvate. The protein is L-lactate dehydrogenase of Streptococcus pneumoniae (strain 70585).